Reading from the N-terminus, the 159-residue chain is Ribosomal RNA large subunit methyltransferase H (159 aa).

S-adenosyl-L-methionine contacts are provided by residues isoleucine 75, glycine 108, and phenylalanine 127 to leucine 132.

It belongs to the RNA methyltransferase RlmH family. In terms of assembly, homodimer.

The protein localises to the cytoplasm. The enzyme catalyses pseudouridine(1915) in 23S rRNA + S-adenosyl-L-methionine = N(3)-methylpseudouridine(1915) in 23S rRNA + S-adenosyl-L-homocysteine + H(+). In terms of biological role, specifically methylates the pseudouridine at position 1915 (m3Psi1915) in 23S rRNA. The protein is Ribosomal RNA large subunit methyltransferase H of Lactococcus lactis subsp. lactis (strain IL1403) (Streptococcus lactis).